The following is a 215-amino-acid chain: Translation initiation factor IF-3 (215 aa).

The interval 159–215 (SAEVQQPPKREGRNMIMFLGPRKTPLQKDKPEQATKAERTLPIAKPPGKTAAPAAAN) is disordered. Positions 184–197 (LQKDKPEQATKAER) are enriched in basic and acidic residues. Residues 200 to 215 (PIAKPPGKTAAPAAAN) show a composition bias toward low complexity.

This sequence belongs to the IF-3 family. In terms of assembly, monomer.

Its subcellular location is the cytoplasm. Its function is as follows. IF-3 binds to the 30S ribosomal subunit and shifts the equilibrium between 70S ribosomes and their 50S and 30S subunits in favor of the free subunits, thus enhancing the availability of 30S subunits on which protein synthesis initiation begins. In Synechococcus sp. (strain RCC307), this protein is Translation initiation factor IF-3.